Consider the following 775-residue polypeptide: Subtilisin-like protease SBT3.8 (775 aa).

Residues 1-26 form the signal peptide; that stretch reads MKSCRTLIFVAIILNGLSTFVAHAGA. Positions 27–109 are cleaved as a propeptide — activation peptide; that stretch reads ESKVHIVYLG…VTPDSFYQLD (83 aa). One can recognise an Inhibitor I9 domain in the interval 30 to 108; it reads VHIVYLGEKQ…HVTPDSFYQL (79 aa). Residues 113-622 enclose the Peptidase S8 domain; that stretch reads TWDYLGLSVA…GGLVNPEKAA (510 aa). N-linked (GlcNAc...) asparagine glycosylation occurs at N129. D143 acts as the Charge relay system in catalysis. N174 and N202 each carry an N-linked (GlcNAc...) asparagine glycan. The Charge relay system role is filled by H218. The 93-residue stretch at 384 to 476 folds into the PA domain; that stretch reads SLVYPENPGN…VDYELGTDIL (93 aa). N-linked (GlcNAc...) asparagine glycans are attached at residues N395, N410, and N538. S553 (charge relay system) is an active-site residue. N-linked (GlcNAc...) asparagine glycans are attached at residues N645, N721, and N756.

Belongs to the peptidase S8 family.

It localises to the secreted. The chain is Subtilisin-like protease SBT3.8 from Arabidopsis thaliana (Mouse-ear cress).